Reading from the N-terminus, the 190-residue chain is Imidazoleglycerol-phosphate dehydratase (190 aa).

It belongs to the imidazoleglycerol-phosphate dehydratase family.

It is found in the cytoplasm. The enzyme catalyses D-erythro-1-(imidazol-4-yl)glycerol 3-phosphate = 3-(imidazol-4-yl)-2-oxopropyl phosphate + H2O. Its pathway is amino-acid biosynthesis; L-histidine biosynthesis; L-histidine from 5-phospho-alpha-D-ribose 1-diphosphate: step 6/9. This chain is Imidazoleglycerol-phosphate dehydratase, found in Wolinella succinogenes (strain ATCC 29543 / DSM 1740 / CCUG 13145 / JCM 31913 / LMG 7466 / NCTC 11488 / FDC 602W) (Vibrio succinogenes).